A 326-amino-acid chain; its full sequence is Beta-ketoacyl-[acyl-carrier-protein] synthase III (326 aa).

Catalysis depends on residues cysteine 112 and histidine 251. Positions 252–256 (QANSR) are ACP-binding. The active site involves asparagine 281.

This sequence belongs to the thiolase-like superfamily. FabH family. In terms of assembly, homodimer.

Its subcellular location is the cytoplasm. The catalysed reaction is malonyl-[ACP] + acetyl-CoA + H(+) = 3-oxobutanoyl-[ACP] + CO2 + CoA. Its pathway is lipid metabolism; fatty acid biosynthesis. Functionally, catalyzes the condensation reaction of fatty acid synthesis by the addition to an acyl acceptor of two carbons from malonyl-ACP. Catalyzes the first condensation reaction which initiates fatty acid synthesis and may therefore play a role in governing the total rate of fatty acid production. Possesses both acetoacetyl-ACP synthase and acetyl transacylase activities. Its substrate specificity determines the biosynthesis of branched-chain and/or straight-chain of fatty acids. This is Beta-ketoacyl-[acyl-carrier-protein] synthase III from Clostridium botulinum (strain Kyoto / Type A2).